Reading from the N-terminus, the 368-residue chain is Repressor ROX1 (368 aa).

The segment at residues 10–83 (IPRPKNAFIL…EHERKYPEYK (74 aa)) is a DNA-binding region (HMG box). Disordered stretches follow at residues 100 to 121 (IEQQ…QPQL) and 242 to 273 (SSQT…SSVL). Over residues 102-121 (QQQQQQQKEQQQQKQSQPQL) the composition is skewed to low complexity.

The protein localises to the nucleus. Its function is as follows. Transcription factor that represses the expression of HEM13, COX5B, ANB1, CYC7 or AAC3 (hypoxic function). Binds to the DNA sequence 5'-RRRTAACAAGAG-3'. This is Repressor ROX1 (ROX1) from Saccharomyces cerevisiae (strain ATCC 204508 / S288c) (Baker's yeast).